A 1704-amino-acid polypeptide reads, in one-letter code: Type-2 histone deacetylase 2 (1704 aa).

Disordered stretches follow at residues 1 to 303 (MSTN…SEER), 315 to 383 (TQGS…TSKK), and 540 to 634 (QFLQ…IGNS). Residues 15-69 (TTITNESNTDNNNNNNDDNKNNTENTTSPTNNNNTNDNDNNSDNNNNKNNNNNNS) show a composition bias toward low complexity. The segment covering 70–81 (QVTEEQQVTLED) has biased composition (polar residues). Acidic residues predominate over residues 97 to 113 (DSAEEDEDEMEDDDEDA). Over residues 134–153 (KVQQSTNTHLSQTTPESPTI) the composition is skewed to polar residues. Residues 165 to 176 (STSTNNTPNTQS) show a composition bias toward low complexity. A compositionally biased stretch (basic and acidic residues) spans 186 to 195 (LTSDEEKDLM). The segment covering 196 to 210 (LSEESDGGVGEDDDS) has biased composition (acidic residues). The span at 222–286 (NQSNQNQNNN…SNNDNNNNNN (65 aa)) shows a compositional bias: low complexity. A compositionally biased stretch (polar residues) spans 315-325 (TQGSSTTTSDP). Residues 326–351 (NNQNNQINQINQNNQNNQNNQNNQNN) show a composition bias toward low complexity. Residues 354 to 369 (GEEEFGEEFEEEEEDM) are compositionally biased toward acidic residues. Residues 372–382 (PKKKTKYKTSK) show a composition bias toward basic residues. Composition is skewed to low complexity over residues 540 to 549 (QFLQQQQQQQ) and 561 to 580 (NSNNSNNNNNNNSNNNNNNS). The segment covering 608–620 (YETRKYTKKRNDE) has biased composition (basic and acidic residues). Residues Asp1165 and Gly1227 each coordinate substrate. Residues Asp1256, His1258, and Asp1350 each contribute to the a divalent metal cation site. Residues 1485-1704 (QLERQKQLQQ…TPQNINNSDN (220 aa)) are disordered. Residues 1491–1616 (QLQQQQQQAQ…NNSNNNNNMN (126 aa)) show a composition bias toward low complexity. A compositionally biased stretch (polar residues) spans 1649-1669 (LSPNSVNRGNNPSNISMSGAQ). The segment covering 1677–1698 (SPKPSNSPNSPSTSNNNGTPQN) has biased composition (low complexity).

Belongs to the histone deacetylase family. HD type 2 subfamily.

It localises to the nucleus. The protein localises to the cytoplasm. It carries out the reaction N(6)-acetyl-L-lysyl-[histone] + H2O = L-lysyl-[histone] + acetate. Its function is as follows. Responsible for the deacetylation of lysine residues on the N-terminal part of the core histones (H2A, H2B, H3 and H4). Histone deacetylation plays an important role in transcriptional regulation, cell cycle progression and developmental events. Histone deacetylases act via the formation of large multiprotein complexes. This chain is Type-2 histone deacetylase 2 (hdaC), found in Dictyostelium discoideum (Social amoeba).